We begin with the raw amino-acid sequence, 335 residues long: Fructokinase-2 (335 aa).

This sequence belongs to the carbohydrate kinase PfkB family. In terms of tissue distribution, expressed in roots, at higher levels in stems, and hardly detectable in leaves.

The catalysed reaction is D-fructose + ATP = D-fructose 6-phosphate + ADP + H(+). The protein operates within glycan biosynthesis; starch biosynthesis. With respect to regulation, inhibited at high fructose. In terms of biological role, may play an important role in maintaining the flux of carbon towards starch formation. May also be involved in a sugar-sensing pathway. The sequence is that of Fructokinase-2 (FRK2) from Zea mays (Maize).